We begin with the raw amino-acid sequence, 700 residues long: Myotubularin-related protein 11 (700 aa).

A disordered region spans residues Met1–Ser39. The 444-residue stretch at Leu201 to Tyr644 folds into the Myotubularin phosphatase domain.

It belongs to the protein-tyrosine phosphatase family. Non-receptor class myotubularin subfamily.

The protein is Myotubularin-related protein 11 (Mtmr11) of Mus musculus (Mouse).